Here is a 738-residue protein sequence, read N- to C-terminus: Catalase-peroxidase (738 aa).

Residues 1–13 (MDGQDIGAGGGCP) are compositionally biased toward gly residues. The interval 1-26 (MDGQDIGAGGGCPFSGANTNKGRRSN) is disordered. Residues 98-226 (WHSAGTYRTA…LAAVQMGLIY (129 aa)) constitute a cross-link (tryptophyl-tyrosyl-methioninium (Trp-Tyr) (with M-252)). The Proton acceptor role is filled by H99. Positions 226–252 (YVNPEGPDGNPDPIASGRDIRETFARM) form a cross-link, tryptophyl-tyrosyl-methioninium (Tyr-Met) (with W-98). H267 provides a ligand contact to heme b.

It belongs to the peroxidase family. Peroxidase/catalase subfamily. Homodimer or homotetramer. Requires heme b as cofactor. Post-translationally, formation of the three residue Trp-Tyr-Met cross-link is important for the catalase, but not the peroxidase activity of the enzyme.

It catalyses the reaction H2O2 + AH2 = A + 2 H2O. The enzyme catalyses 2 H2O2 = O2 + 2 H2O. In terms of biological role, bifunctional enzyme with both catalase and broad-spectrum peroxidase activity. The polypeptide is Catalase-peroxidase (Ruegeria sp. (strain TM1040) (Silicibacter sp.)).